The chain runs to 426 residues: 10-deoxymethynolide desosaminyltransferase (426 aa).

Belongs to the glycosyltransferase 28 family. Forms a complex with DesVIII.

It carries out the reaction 10-deoxymethynolide + dTDP-alpha-D-desosamine = 10-deoxymethymycin + dTDP + H(+). It participates in antibiotic biosynthesis. Its function is as follows. Involved in the biosynthesis of the macrolide antibiotics methymycin, neomethymycin, narbomycin, and pikromycin. Catalyzes the attachment of dTDP-D-desosamine onto 12- and 14-membered macrolactone rings 10-deoxymethynolide and narbonolide to produce 10-deoxymethymycin (YC-17) and narbomycin. DesVII is unique among glycosyltransferases in that it requires an additional protein component, DesVIII, for its activity. DesVII can recognize and process not only cyclic substrates of different ring size, but also a variety of linear substrates albeit with reduced, but measurable activities. Both L-sugars and D-sugars are recognized as substrates and variant substitutions at C-3 and C-4 are tolerated, but deoxygenation at C-6 is required. This is 10-deoxymethynolide desosaminyltransferase from Streptomyces venezuelae.